Reading from the N-terminus, the 202-residue chain is 3-isopropylmalate dehydratase small subunit (202 aa).

Belongs to the LeuD family. LeuD type 1 subfamily. In terms of assembly, heterodimer of LeuC and LeuD.

The catalysed reaction is (2R,3S)-3-isopropylmalate = (2S)-2-isopropylmalate. Its pathway is amino-acid biosynthesis; L-leucine biosynthesis; L-leucine from 3-methyl-2-oxobutanoate: step 2/4. Functionally, catalyzes the isomerization between 2-isopropylmalate and 3-isopropylmalate, via the formation of 2-isopropylmaleate. In Rhizobium etli (strain CIAT 652), this protein is 3-isopropylmalate dehydratase small subunit.